A 510-amino-acid polypeptide reads, in one-letter code: Cytochrome P450 52C2 (510 aa).

Cysteine 458 serves as a coordination point for heme.

This sequence belongs to the cytochrome P450 family. Heme serves as cofactor.

It localises to the membrane. Together with an NADPH cytochrome P450 the enzyme system catalyzes the terminal hydroxylation as the first step in the assimilation of alkanes and fatty acids. The sequence is that of Cytochrome P450 52C2 (CYP52C2) from Candida maltosa (Yeast).